Reading from the N-terminus, the 404-residue chain is Argininosuccinate synthase (404 aa).

Residues 10-18 and Ala37 contribute to the ATP site; that span reads AYSGGLDTS. Residues Tyr90 and Ser95 each coordinate L-citrulline. Gly120 is a binding site for ATP. 3 residues coordinate L-aspartate: Thr122, Asn126, and Asp127. Residue Asn126 participates in L-citrulline binding. Residues Arg130, Ser181, Ser190, Glu266, and Tyr278 each coordinate L-citrulline. The segment at 173-200 is disordered; that stretch reads DKRGESPFSTDANLLHTSSEGKVLEDPW. Positions 179–192 are enriched in polar residues; sequence PFSTDANLLHTSSE.

This sequence belongs to the argininosuccinate synthase family. Type 1 subfamily. Homotetramer.

The protein resides in the cytoplasm. The catalysed reaction is L-citrulline + L-aspartate + ATP = 2-(N(omega)-L-arginino)succinate + AMP + diphosphate + H(+). The protein operates within amino-acid biosynthesis; L-arginine biosynthesis; L-arginine from L-ornithine and carbamoyl phosphate: step 2/3. The chain is Argininosuccinate synthase from Novosphingobium aromaticivorans (strain ATCC 700278 / DSM 12444 / CCUG 56034 / CIP 105152 / NBRC 16084 / F199).